A 709-amino-acid chain; its full sequence is Twinkle homolog protein, chloroplastic/mitochondrial (709 aa).

The transit peptide at 1 to 16 (MRFLLRLPQIHFRKLS) directs the protein to the chloroplast and mitochondrion. A Toprim domain is found at 280-385 (SEVIIVEGEI…KKSEDEHFKD (106 aa)). E286, D348, and D350 together coordinate Mg(2+). Positions 430 to 698 (THGHEYGVST…GSYSDSPVTP (269 aa)) constitute an SF4 helicase domain. 460-467 (GIPNSGKS) lines the ATP pocket.

Requires Mg(2+) as cofactor. Expressed in young leaves and shoot apex tissues. Detected in developing tissues such as cotyledons, sepals, pistils and inflorescences. Nearly undetectable in mature leaves.

The protein resides in the plastid. It localises to the chloroplast. It is found in the mitochondrion. The catalysed reaction is ATP + H2O = ADP + phosphate + H(+). Its function is as follows. Has both DNA primase and DNA helicase activities and may be involved in organelle DNA replication. Capable of producing RNA primers of 9 to 18 bases from a single-stranded DNA template. This Arabidopsis thaliana (Mouse-ear cress) protein is Twinkle homolog protein, chloroplastic/mitochondrial.